A 346-amino-acid chain; its full sequence is UDP-3-O-acylglucosamine N-acyltransferase (346 aa).

Catalysis depends on His-253, which acts as the Proton acceptor.

This sequence belongs to the transferase hexapeptide repeat family. LpxD subfamily. Homotrimer.

It catalyses the reaction a UDP-3-O-[(3R)-3-hydroxyacyl]-alpha-D-glucosamine + a (3R)-hydroxyacyl-[ACP] = a UDP-2-N,3-O-bis[(3R)-3-hydroxyacyl]-alpha-D-glucosamine + holo-[ACP] + H(+). The protein operates within bacterial outer membrane biogenesis; LPS lipid A biosynthesis. Functionally, catalyzes the N-acylation of UDP-3-O-acylglucosamine using 3-hydroxyacyl-ACP as the acyl donor. Is involved in the biosynthesis of lipid A, a phosphorylated glycolipid that anchors the lipopolysaccharide to the outer membrane of the cell. The protein is UDP-3-O-acylglucosamine N-acyltransferase of Rickettsia typhi (strain ATCC VR-144 / Wilmington).